The sequence spans 229 residues: Large ribosomal subunit protein uL1 (229 aa).

It belongs to the universal ribosomal protein uL1 family. Part of the 50S ribosomal subunit.

Binds directly to 23S rRNA. The L1 stalk is quite mobile in the ribosome, and is involved in E site tRNA release. Its function is as follows. Protein L1 is also a translational repressor protein, it controls the translation of the L11 operon by binding to its mRNA. This is Large ribosomal subunit protein uL1 from Haemophilus ducreyi (strain 35000HP / ATCC 700724).